The primary structure comprises 440 residues: Enolase 1-2 (440 aa).

Substrate contacts are provided by H160 and E169. The active-site Proton donor is E212. Mg(2+) is bound by residues D247, E296, and D321. Positions 296 and 321 each coordinate substrate. K346 functions as the Proton acceptor in the catalytic mechanism. Substrate-binding positions include 373–376 (SHRS) and K397.

It belongs to the enolase family. Homodimer. Mg(2+) serves as cofactor.

The protein resides in the cytoplasm. It carries out the reaction (2R)-2-phosphoglycerate = phosphoenolpyruvate + H2O. It functions in the pathway carbohydrate degradation; glycolysis; pyruvate from D-glyceraldehyde 3-phosphate: step 4/5. This is Enolase 1-2 (eno102) from Schizosaccharomyces pombe (strain 972 / ATCC 24843) (Fission yeast).